The primary structure comprises 487 residues: N-succinylglutamate 5-semialdehyde dehydrogenase (487 aa).

Position 221–226 (221–226) interacts with NAD(+); the sequence is GSSRTG. Residues glutamate 244 and cysteine 278 contribute to the active site.

It belongs to the aldehyde dehydrogenase family. AstD subfamily.

The catalysed reaction is N-succinyl-L-glutamate 5-semialdehyde + NAD(+) + H2O = N-succinyl-L-glutamate + NADH + 2 H(+). It participates in amino-acid degradation; L-arginine degradation via AST pathway; L-glutamate and succinate from L-arginine: step 4/5. Functionally, catalyzes the NAD-dependent reduction of succinylglutamate semialdehyde into succinylglutamate. This Ectopseudomonas mendocina (strain ymp) (Pseudomonas mendocina) protein is N-succinylglutamate 5-semialdehyde dehydrogenase.